The primary structure comprises 237 residues: MEKHDLLYEGKAKKIYRTDEEGLLWVEYKNSATAFNGEKKASIEGKARLNNEISSLIFSYLKEQGVDSHFVKRLSETEQLIHQVTIIPLEVVVRNVIAGSLAKRIGIEEGTPLEKPLVEFYYKDDDLGDPLVTEDHIAILQAATKEQVDILKVKAIEVNDALTTFFAGIGVKLVDFKLEFGVTADGAILLADEISPDTCRLWDAKTGERFDKDLFRRNLGNLQDGYEQILTRIEQKA.

It belongs to the SAICAR synthetase family.

It catalyses the reaction 5-amino-1-(5-phospho-D-ribosyl)imidazole-4-carboxylate + L-aspartate + ATP = (2S)-2-[5-amino-1-(5-phospho-beta-D-ribosyl)imidazole-4-carboxamido]succinate + ADP + phosphate + 2 H(+). The protein operates within purine metabolism; IMP biosynthesis via de novo pathway; 5-amino-1-(5-phospho-D-ribosyl)imidazole-4-carboxamide from 5-amino-1-(5-phospho-D-ribosyl)imidazole-4-carboxylate: step 1/2. The polypeptide is Phosphoribosylaminoimidazole-succinocarboxamide synthase (Halalkalibacterium halodurans (strain ATCC BAA-125 / DSM 18197 / FERM 7344 / JCM 9153 / C-125) (Bacillus halodurans)).